The sequence spans 354 residues: Ubiquitin-conjugating enzyme E2 Z (354 aa).

Positions 1–21 are disordered; sequence MAESPTEEAATAGAGAAGPGA. In terms of domain architecture, UBC core spans 99–253; it reads QCLLRIKRDI…IRHETIRVAV (155 aa). Catalysis depends on C188, which acts as the Glycyl thioester intermediate. Residues 332-354 are disordered; that stretch reads NAEMDSDSSSSGTETDLHGSLRV. S337 is modified (phosphoserine).

The protein belongs to the ubiquitin-conjugating enzyme family. As to expression, widely expressed. Highly in placenta, pancreas, spleen and testis.

It is found in the cytoplasm. Its subcellular location is the nucleus. The enzyme catalyses S-ubiquitinyl-[E1 ubiquitin-activating enzyme]-L-cysteine + [E2 ubiquitin-conjugating enzyme]-L-cysteine = [E1 ubiquitin-activating enzyme]-L-cysteine + S-ubiquitinyl-[E2 ubiquitin-conjugating enzyme]-L-cysteine.. The protein operates within protein modification; protein ubiquitination. Its function is as follows. Catalyzes the covalent attachment of ubiquitin to other proteins. Specific substrate for UBA6, not charged with ubiquitin by UBE1. May be involved in apoptosis regulation. This Homo sapiens (Human) protein is Ubiquitin-conjugating enzyme E2 Z (UBE2Z).